The chain runs to 232 residues: Chaperone protein LpfB (232 aa).

The signal sequence occupies residues 1–23; that stretch reads MNRSRLISCTALVLALIAQNSFA.

It belongs to the periplasmic pilus chaperone family.

It localises to the periplasm. In terms of biological role, required for the biogenesis of long polar fimbria; binds and interact with LpfA. The chain is Chaperone protein LpfB (lpfB) from Salmonella typhimurium (strain LT2 / SGSC1412 / ATCC 700720).